A 534-amino-acid chain; its full sequence is Origin of replication complex subunit 5 (534 aa).

The disordered stretch occupies residues 1-36 (MPPKEESSKVTRRSTRSSASVTVENSEPIESHTPTI). 83–90 (GGASTGKT) is a binding site for ATP. A Nuclear localization signal motif is present at residues 129–136 (HRKCSLNG). Positions 397–428 (MFDSTGGMDNRKRKRKASEKSMEKKEIAEQEA) are disordered. The span at 414–424 (SEKSMEKKEIA) shows a compositional bias: basic and acidic residues.

This sequence belongs to the ORC5 family. In terms of assembly, component of the origin recognition complex (ORC) composed of at least ORC1 (ORC1A or ORC1B), ORC2, ORC3, ORC4, ORC5 and ORC6. ORC is regulated in a cell-cycle and development dependent manner. It is sequentially assembled at the exit from anaphase of mitosis and disassembled as cells enter S phase. Interacts directly with ORC1A, ORC1B, ORC2, ORC3, ORC4 and ORC6. As to expression, follow a cell-cycle regulation with a peak at the G1/S-phase. Mostly expressed in flower buds and cauline leaves, and, to a lower exent, in roots, leaves and stems. Expressed at low levels ubiquitously.

The protein resides in the nucleus. Component of the origin recognition complex (ORC) that binds origins of replication. DNA-binding is ATP-dependent. The specific DNA sequences that define origins of replication have not been identified yet. ORC is required to assemble the pre-replication complex necessary to initiate DNA replication. The polypeptide is Origin of replication complex subunit 5 (Arabidopsis thaliana (Mouse-ear cress)).